A 409-amino-acid polypeptide reads, in one-letter code: Snake venom metalloproteinase BITM02A (409 aa).

The first 20 residues, 1 to 20 (MIEVLLVTICLAAFPYQGSS), serve as a signal peptide directing secretion. A propeptide spanning residues 21 to 189 (IILESGNVND…KKASQSNLTP (169 aa)) is cleaved from the precursor. Positions 193 to 389 (RYIELFIVVD…ENPQCILNKR (197 aa)) constitute a Peptidase M12B domain. 2 residues coordinate Ca(2+): Glu196 and Asp280. Cystine bridges form between Cys304-Cys384, Cys344-Cys368, and Cys346-Cys351. His329 contacts Zn(2+). Glu330 is an active-site residue. Residues His333 and His339 each coordinate Zn(2+). Residues Cys384, Asn387, Val399, Asn402, Leu404, Glu406, and Glu409 each coordinate Ca(2+). Positions 390-409 (LRTDTVSTPVSGNELLEAGE) are excised as a propeptide.

Belongs to the venom metalloproteinase (M12B) family. P-I subfamily. Monomer. The cofactor is Zn(2+). As to expression, expressed by the venom gland.

The protein resides in the secreted. Snake venom metalloproteinase that impairs hemostasis in the envenomed animal. The chain is Snake venom metalloproteinase BITM02A from Bothrops insularis (Golden lancehead).